Reading from the N-terminus, the 439-residue chain is MRKLFFFLCTHVPKQRAKFTRIMESCQKKQKLETPTELSDMPDDLIFKIFSFLPFFKEDLATRFISEYGKGLWNPDPNAIFDDESLDMTCMSFVYGSLMSKDAQILDSLHLKLRKYYIASDINFLVQLGVNRSMRELRIDFFGKTLELPCCLSTCTTLKVLVLDHLNIMSVPGWFRLPSVETLQLSSVTGGSNYVPSLIRLCSVHERLVVDQNRNKDLVNINVPTLRSLSIDNKRRGHVPLGSFWINVPSLMFLNIKDTFQTIFESMPAMIKANIEVAHDQSQSVKFIESLTSTRHLCLCSPTSENPYPNGTKFSNLVHLKLCTCSAGWQNLLACMLNDAPNLRSLTLKLRQKSDVNPKKVWEKPTVVPECLSTRLEILKWRDYEGTEHEKDMVGYILANATFLQRATFSTKDRNQCDSRFSELQSMERVSEICEFVFD.

Residues 35–81 (PTELSDMPDDLIFKIFSFLPFFKEDLATRFISEYGKGLWNPDPNAIF) form the F-box domain. 2 LRR repeats span residues 155 to 177 (CTTLKVLVLDHLNIMSVPGWFRL) and 223 to 246 (VPTLRSLSIDNKRRGHVPLGSFWI). The region spanning 361–411 (VWEKPTVVPECLSTRLEILKWRDYEGTEHEKDMVGYILANATFLQRATFST) is the FBD domain.

The polypeptide is F-box/FBD/LRR-repeat protein At5g56570 (Arabidopsis thaliana (Mouse-ear cress)).